We begin with the raw amino-acid sequence, 480 residues long: Protein nucleotidyltransferase YdiU (480 aa).

Residues Gly86, Gly88, Arg89, Lys109, Asp121, Gly122, Arg172, and Arg179 each coordinate ATP. Asp248 serves as the catalytic Proton acceptor. Mg(2+) contacts are provided by Asn249 and Asp258. Residue Asp258 coordinates ATP.

Belongs to the SELO family. Mg(2+) is required as a cofactor. It depends on Mn(2+) as a cofactor.

The enzyme catalyses L-seryl-[protein] + ATP = 3-O-(5'-adenylyl)-L-seryl-[protein] + diphosphate. The catalysed reaction is L-threonyl-[protein] + ATP = 3-O-(5'-adenylyl)-L-threonyl-[protein] + diphosphate. It catalyses the reaction L-tyrosyl-[protein] + ATP = O-(5'-adenylyl)-L-tyrosyl-[protein] + diphosphate. It carries out the reaction L-histidyl-[protein] + UTP = N(tele)-(5'-uridylyl)-L-histidyl-[protein] + diphosphate. The enzyme catalyses L-seryl-[protein] + UTP = O-(5'-uridylyl)-L-seryl-[protein] + diphosphate. The catalysed reaction is L-tyrosyl-[protein] + UTP = O-(5'-uridylyl)-L-tyrosyl-[protein] + diphosphate. Nucleotidyltransferase involved in the post-translational modification of proteins. It can catalyze the addition of adenosine monophosphate (AMP) or uridine monophosphate (UMP) to a protein, resulting in modifications known as AMPylation and UMPylation. The protein is Protein nucleotidyltransferase YdiU of Salmonella choleraesuis (strain SC-B67).